Here is a 164-residue protein sequence, read N- to C-terminus: Peptidyl-prolyl cis-trans isomerase A (164 aa).

At M1 the chain carries N-acetylmethionine. At V2 the chain carries N-acetylvaline; in Peptidyl-prolyl cis-trans isomerase A, N-terminally processed. The PPIase cyclophilin-type domain occupies 7–163 (FFDIAVDGEP…KKITIADCGQ (157 aa)). K28 is modified (N6-acetyllysine; alternate). A Glycyl lysine isopeptide (Lys-Gly) (interchain with G-Cter in SUMO2); alternate cross-link involves residue K28. Residue K28 forms a Glycyl lysine isopeptide (Lys-Gly) (interchain with G-Cter in ubiquitin); alternate linkage. An N6-acetyllysine mark is found at K44 and K76. Phosphoserine is present on S77. K82 is subject to N6-acetyllysine; alternate. K82 is covalently cross-linked (Glycyl lysine isopeptide (Lys-Gly) (interchain with G-Cter in SUMO2); alternate). The residue at position 93 (T93) is a Phosphothreonine. N-linked (GlcNAc...) asparagine glycosylation is present at N108. Residues K125, K131, and K133 each carry the N6-acetyllysine modification.

This sequence belongs to the cyclophilin-type PPIase family. PPIase A subfamily. In terms of assembly, interacts with protein phosphatase PPP3CA/calcineurin A. Interacts with isoform 2 of BSG/CD147. Interacts with FOXO1; the interaction promotes FOXO1 dephosphorylation, nuclear accumulation and transcriptional activity. Interacts with integrin ITGA2B:ITGB3; the interaction is ROS and peptidyl-prolyl cis-trans isomerase (PPIase) activity-dependent and is increased in the presence of thrombin. Interacts with MAP3K5. Interacts with TARDBP; the interaction is dependent on the RNA-binding activity of TARDBP and the PPIase activity of PPIA/CYPA and the acetylation of PPIA/CYPA at Lys-125 favors the interaction. Interacts with HNRNPA1, HNRNPA2B1, HNRNPC, RBMX, HNRNPK and HNRNPM. Acetylation at Lys-125 markedly inhibits catalysis of cis to trans isomerization. PPIA acetylation also antagonizes the immunosuppressive effects of cyclosporine by inhibiting the sequential steps of cyclosporine binding and calcineurin inhibition. Acetylation at Lys-125 favors the interaction with TARDBP.

The protein localises to the cytoplasm. The protein resides in the secreted. Its subcellular location is the nucleus. It catalyses the reaction [protein]-peptidylproline (omega=180) = [protein]-peptidylproline (omega=0). Binds cyclosporin A (CsA). CsA mediates some of its effects via an inhibitory action on PPIase. Functionally, catalyzes the cis-trans isomerization of proline imidic peptide bonds in oligopeptides. Exerts a strong chemotactic effect on leukocytes partly through activation of one of its membrane receptors BSG/CD147, initiating a signaling cascade that culminates in MAPK/ERK activation. Activates endothelial cells (ECs) in a proinflammatory manner by stimulating activation of NF-kappa-B and ERK, JNK and p38 MAP-kinases and by inducing expression of adhesion molecules including SELE and VCAM1. Induces apoptosis in ECs by promoting the FOXO1-dependent expression of CCL2 and BCL2L11 which are involved in EC chemotaxis and apoptosis. In response to oxidative stress, initiates proapoptotic and antiapoptotic signaling in ECs via activation of NF-kappa-B and AKT1 and up-regulation of antiapoptotic protein BCL2. Negatively regulates MAP3K5/ASK1 kinase activity, autophosphorylation and oxidative stress-induced apoptosis mediated by MAP3K5/ASK1. Necessary for the assembly of TARDBP in heterogeneous nuclear ribonucleoprotein (hnRNP) complexes and regulates TARDBP binding to RNA UG repeats and TARDBP-dependent expression of HDAC6, ATG7 and VCP which are involved in clearance of protein aggregates. Plays an important role in platelet activation and aggregation. Regulates calcium mobilization and integrin ITGA2B:ITGB3 bidirectional signaling via increased ROS production as well as by facilitating the interaction between integrin and the cell cytoskeleton. Binds heparan sulfate glycosaminoglycans. This Saguinus oedipus (Cotton-top tamarin) protein is Peptidyl-prolyl cis-trans isomerase A (PPIA).